The sequence spans 380 residues: Queuine tRNA-ribosyltransferase (380 aa).

Aspartate 96 serves as the catalytic Proton acceptor. Substrate contacts are provided by residues 96-100, aspartate 150, glutamine 193, and glycine 220; that span reads DSGGF. The RNA binding stretch occupies residues 251 to 257; it reads GVGAPDS. The Nucleophile role is filled by aspartate 270. An RNA binding; important for wobble base 34 recognition region spans residues 275-279; it reads TRIAR. Zn(2+)-binding residues include cysteine 308, cysteine 310, cysteine 313, and histidine 339.

This sequence belongs to the queuine tRNA-ribosyltransferase family. In terms of assembly, homodimer. Within each dimer, one monomer is responsible for RNA recognition and catalysis, while the other monomer binds to the replacement base PreQ1. The cofactor is Zn(2+).

The enzyme catalyses 7-aminomethyl-7-carbaguanine + guanosine(34) in tRNA = 7-aminomethyl-7-carbaguanosine(34) in tRNA + guanine. It functions in the pathway tRNA modification; tRNA-queuosine biosynthesis. Catalyzes the base-exchange of a guanine (G) residue with the queuine precursor 7-aminomethyl-7-deazaguanine (PreQ1) at position 34 (anticodon wobble position) in tRNAs with GU(N) anticodons (tRNA-Asp, -Asn, -His and -Tyr). Catalysis occurs through a double-displacement mechanism. The nucleophile active site attacks the C1' of nucleotide 34 to detach the guanine base from the RNA, forming a covalent enzyme-RNA intermediate. The proton acceptor active site deprotonates the incoming PreQ1, allowing a nucleophilic attack on the C1' of the ribose to form the product. After dissociation, two additional enzymatic reactions on the tRNA convert PreQ1 to queuine (Q), resulting in the hypermodified nucleoside queuosine (7-(((4,5-cis-dihydroxy-2-cyclopenten-1-yl)amino)methyl)-7-deazaguanosine). In Streptococcus gordonii (strain Challis / ATCC 35105 / BCRC 15272 / CH1 / DL1 / V288), this protein is Queuine tRNA-ribosyltransferase.